Here is a 338-residue protein sequence, read N- to C-terminus: Anthranilate phosphoribosyltransferase (338 aa).

5-phospho-alpha-D-ribose 1-diphosphate contacts are provided by residues Gly81, 84–85 (GD), Thr89, 91–94 (NIST), 109–117 (KHGNRALSS), and Ala121. Gly81 lines the anthranilate pocket. Position 93 (Ser93) interacts with Mg(2+). Anthranilate is bound at residue Asn112. Arg167 provides a ligand contact to anthranilate. Positions 225 and 226 each coordinate Mg(2+).

It belongs to the anthranilate phosphoribosyltransferase family. Homodimer. Mg(2+) is required as a cofactor.

The catalysed reaction is N-(5-phospho-beta-D-ribosyl)anthranilate + diphosphate = 5-phospho-alpha-D-ribose 1-diphosphate + anthranilate. The protein operates within amino-acid biosynthesis; L-tryptophan biosynthesis; L-tryptophan from chorismate: step 2/5. Catalyzes the transfer of the phosphoribosyl group of 5-phosphorylribose-1-pyrophosphate (PRPP) to anthranilate to yield N-(5'-phosphoribosyl)-anthranilate (PRA). This Rhizobium etli (strain ATCC 51251 / DSM 11541 / JCM 21823 / NBRC 15573 / CFN 42) protein is Anthranilate phosphoribosyltransferase.